A 119-amino-acid chain; its full sequence is TSIYTCYEGVGLPVDPLQGCHYYVTSQTCGFVPLLPIEVMKDRCCRELAAISSNCRCEGLRVFIDRAFPPSQSQGGGPPQPPLAPRCPTEVKRDFARTLALPGQCNLPTIHGGPYCVFP.

5 cysteine pairs are disulfide-bonded: C6/C55, C20/C44, C29/C87, C45/C105, and C57/C116.

It is found in the secreted. Inhibits bovine, insect and wheat chymotrypsins. Inhibits bovine chymotrypsin with Ki of 0.6 nM. Does not inhibit human or wheat alpha-amylases, bovine pancreatic trypsin, or trypsin-like activity isolated from wheat. This Triticum aestivum (Wheat) protein is Chymotrypsin inhibitor WCI.